We begin with the raw amino-acid sequence, 177 residues long: MKLPKEGDFITIQSYKHDGSLHRTWRDTMVLKTTENAIIGVNDHTLVTESDGRRWVTREPAIVYFHKKYWFNIIAMIRDNGTSYYCNMASPYYLDEEALKYIDYDLDVKIFTDGEKRLLDVEEYERHKRKMNYSDDLDYILKEHVKILVDWINNGRGPFSEAYVNIWYKRYVELKNR.

Arg23 acts as the Proton donor in catalysis. Positions 87, 103, 105, 107, 120, and 123 each coordinate Mg(2+).

It belongs to the Ntdp family. Mg(2+) serves as cofactor.

It catalyses the reaction a ribonucleoside 5'-triphosphate + H2O = a ribonucleoside 5'-diphosphate + phosphate + H(+). The enzyme catalyses a ribonucleoside 5'-diphosphate + H2O = a ribonucleoside 5'-phosphate + phosphate + H(+). In terms of biological role, has nucleoside phosphatase activity towards nucleoside triphosphates and nucleoside diphosphates. In Streptococcus pneumoniae serotype 2 (strain D39 / NCTC 7466), this protein is Nucleoside triphosphate/diphosphate phosphatase.